The chain runs to 391 residues: Tumor susceptibility gene 101 protein (391 aa).

Alanine 2 carries the post-translational modification N-acetylalanine. Positions 2-145 constitute a UEV domain; sequence AVSESQLKKM…GEEPPVFSRP (144 aa). Residues 159–163 form an interaction with CEP55 region; the sequence is PPNTS. The interval 197 to 220 is disordered; sequence YPATTSSQYPSQPPVTTVGPSRDG. Over residues 200-215 the composition is skewed to polar residues; the sequence is TTSSQYPSQPPVTTVG. Threonine 221 is subject to Phosphothreonine. A coiled-coil region spans residues 237–317; it reads DKLRWRMKEE…NQSENNDIDE (81 aa). A PTAP/PSAP motif motif is present at residues 321 to 324; it reads PTAP. Residues 323-391 enclose the SB domain; sequence APLYKQILNL…RKTAGLSDLY (69 aa).

The protein belongs to the ubiquitin-conjugating enzyme family. UEV subfamily. Component of the ESCRT-I complex (endosomal sorting complex required for transport I) which consists of TSG101, VPS28, a VPS37 protein (VPS37A to -D) and MVB12A or MVB12B in a 1:1:1:1 stoichiometry. Interacts with VPS37A, VPS37B and VPS37C. Component of an ESCRT-I complex (endosomal sorting complex required for transport I) which consists of TSG101, VPS28, VPS37A and UBAP1 in a 1:1:1:1 stoichiometry. Interacts with DMAP1. Interacts with GMCL. Interacts with ubiquitin, stathmin and AATF. Interacts with HGS; the interaction mediates the association with the ESCRT-0 complex. Interacts with GGA1 and GGA3. Interacts (via UEV domain) with PDCD6IP/AIP1. Interacts with VPS28, SNF8 and VPS36. Self-associates. Interacts with MVB12A; the association appears to be mediated by the TSG101-VPS37 binary subcomplex. Interacts with VPS37D. Interacts with LRSAM1. Interacts with CEP55; the interaction is required for cytokinesis. Interacts with PDCD6. Interacts with LITAF. Interacts with murine leukemia virus Gag polyprotein (via PSAP motif). Interacts with MGRN1. Interacts with ARRDC1; recruits TSG101 to the plasma membrane. Post-translationally, monoubiquitinated at multiple sites by LRSAM1 and by MGRN1. Ubiquitination inactivates it, possibly by regulating its shuttling between an active membrane-bound protein and an inactive soluble form. Ubiquitination by MGRN1 requires the presence of UBE2D1. Ubiquitous. Higher expression in brain and mammary gland. Lower expression in liver and tumoral tissues.

Its subcellular location is the cytoplasm. The protein localises to the early endosome membrane. The protein resides in the late endosome membrane. It is found in the cytoskeleton. It localises to the microtubule organizing center. Its subcellular location is the centrosome. The protein localises to the midbody. The protein resides in the midbody ring. It is found in the nucleus. Functionally, component of the ESCRT-I complex, a regulator of vesicular trafficking process. Binds to ubiquitinated cargo proteins and is required for the sorting of endocytic ubiquitinated cargos into multivesicular bodies (MVBs). Mediates the association between the ESCRT-0 and ESCRT-I complex. Required for completion of cytokinesis; the function requires CEP55. May be involved in cell growth and differentiation. Acts as a negative growth regulator. Required for the exosomal release of SDCBP, CD63 and syndecan. It may also play a role in the extracellular release of microvesicles that differ from the exosomes. The protein is Tumor susceptibility gene 101 protein (Tsg101) of Mus musculus (Mouse).